The primary structure comprises 406 residues: Interactor protein for cytohesin exchange factors 1 (406 aa).

Residues 13–112 form the PH domain; the sequence is HADCQGWLYK…WLNKLGFAVT (100 aa). Disordered regions lie at residues 118 to 173, 228 to 285, and 383 to 406; these read TKDE…FSSL, CRVS…EDDE, and PQDP…ENSL. Acidic residues predominate over residues 123–134; the sequence is CYSESEQEDPET. Low complexity predominate over residues 144-160; the sequence is ASATSSPVAARRASSSS. Over residues 228–239 the composition is skewed to polar residues; the sequence is CRVSENSSTTPE. The segment covering 243–259 has biased composition (low complexity); that stretch reads LNSLSSDDTSSLNNSQD. Residues 272 to 285 are compositionally biased toward basic and acidic residues; that stretch reads MTDRDEIKSSEDDE. Positions 285–406 are necessary for interaction with PSCD2 and to translocate to the plasma membrane; the sequence is EMEKLYKSLE…TSSDCVENSL (122 aa). Residues 392 to 406 are compositionally biased toward polar residues; the sequence is EIMNPTSSDCVENSL.

In terms of assembly, interacts with guanine-nucleotide exchange factors PSCD1, PSCD2, PSCD3 and PSCD4. Expressed in brain, spleen, lung, testis and kidney.

The protein resides in the cytoplasm. The protein localises to the cell membrane. Enhances the promotion of guanine-nucleotide exchange by PSCD2 on ARF6 in a concentration-dependent manner. The sequence is that of Interactor protein for cytohesin exchange factors 1 (Ipcef1) from Rattus norvegicus (Rat).